Reading from the N-terminus, the 84-residue chain is Small ribosomal subunit protein uS17 (84 aa).

The protein belongs to the universal ribosomal protein uS17 family. In terms of assembly, part of the 30S ribosomal subunit.

In terms of biological role, one of the primary rRNA binding proteins, it binds specifically to the 5'-end of 16S ribosomal RNA. This Alkaliphilus metalliredigens (strain QYMF) protein is Small ribosomal subunit protein uS17.